The primary structure comprises 162 residues: Phosphopantetheine adenylyltransferase (162 aa).

Substrate is bound at residue serine 9. Residues 9–10 and histidine 17 contribute to the ATP site; that span reads SF. Substrate contacts are provided by lysine 41, leucine 73, and lysine 87. ATP is bound by residues 88–90, glutamate 98, and 122–128; these read GLR and YSFLSSS.

This sequence belongs to the bacterial CoaD family. In terms of assembly, homohexamer. The cofactor is Mg(2+).

Its subcellular location is the cytoplasm. It catalyses the reaction (R)-4'-phosphopantetheine + ATP + H(+) = 3'-dephospho-CoA + diphosphate. It participates in cofactor biosynthesis; coenzyme A biosynthesis; CoA from (R)-pantothenate: step 4/5. Functionally, reversibly transfers an adenylyl group from ATP to 4'-phosphopantetheine, yielding dephospho-CoA (dPCoA) and pyrophosphate. The polypeptide is Phosphopantetheine adenylyltransferase (Salinispora tropica (strain ATCC BAA-916 / DSM 44818 / JCM 13857 / NBRC 105044 / CNB-440)).